Consider the following 143-residue polypeptide: Putative nickel-responsive regulator (143 aa).

Residues His-82, His-97, His-99, and Cys-105 each coordinate Ni(2+).

This sequence belongs to the transcriptional regulatory CopG/NikR family. Ni(2+) serves as cofactor.

In terms of biological role, transcriptional regulator. This Helicobacter hepaticus (strain ATCC 51449 / 3B1) protein is Putative nickel-responsive regulator.